A 491-amino-acid polypeptide reads, in one-letter code: Probable V-type proton ATPase subunit B 1 (491 aa).

An ATP-binding site is contributed by Arg-380.

This sequence belongs to the ATPase alpha/beta chains family. In terms of assembly, V-ATPase is a heteromultimeric enzyme made up of two complexes: the ATP-hydrolytic V1 complex and the proton translocation V0 complex. The V1 complex consists of three catalytic AB heterodimers that form a heterohexamer, three peripheral stalks each consisting of EG heterodimers, one central rotor including subunits D and F, and the regulatory subunits C and H. The proton translocation complex V0 consists of the proton transport subunit a, a ring of proteolipid subunits c9c'', rotary subunit d, subunits e and f, and the accessory subunits vah-19/Ac45 and vah-20/PRR.

In terms of biological role, non-catalytic subunit of the V1 complex of vacuolar(H+)-ATPase (V-ATPase), a multisubunit enzyme composed of a peripheral complex (V1) that hydrolyzes ATP and a membrane integral complex (V0) that translocates protons. V-ATPase is responsible for acidifying and maintaining the pH of intracellular compartments and in some cell types, is targeted to the plasma membrane, where it is responsible for acidifying the extracellular environment. Essential for the proper assembly and activity of V-ATPase. Required maternally for early embryogenesis and zygotically during morphogenesis. Specifically, involved in the clearance of apoptotic cell corpses in embryos. Also, during embryonic development, the V-ATPase is required to repress fusion of epidermal cells probably by negatively regulating eff-1-mediated cell fusion. In neurons, required for necrotic cell death by promoting intracellular acidification. Required for cell death induced by hypoxia. Required for acidification of synaptic vesicles and the release of neurotransmitters from adult neurons. In Caenorhabditis briggsae, this protein is Probable V-type proton ATPase subunit B 1.